The primary structure comprises 241 residues: Carboxysome assembly protein CcmN (241 aa).

The interval Gly-123–Ala-206 is disordered. The span at Gln-185–Ser-195 shows a compositional bias: polar residues. A compositionally biased stretch (low complexity) spans Thr-196–Ala-206. Positions Val-219–Ser-241 match the Encapsulation peptide motif.

Belongs to the CcmN family. In terms of assembly, interacts with full-length and the N-terminal 249 residues of CcmM; a probable CcmM-CcaA-CcmN complex can also be isolated. Interacts with CcmK.

It localises to the carboxysome. Its function is as follows. Required for carboxysome formation; the N-terminus interacts with CcmM which itself binds RuBisCO (ribulose bisphosphate carboxylase, rbcL-rbcS). May also contact shell protein CcmK to help assemble the carboxysome. Beta-carboxysome assembly initiates when soluble RuBisCO is condensed into a liquid matrix in a pre-carboxysome by the RbcS-like domains of probably both forms of CcmM. CcmN interacts with the N-terminus of full-length CcmM, and then recruits the CcmK major shell protein via CcmN's encapsulation peptide. Shell formation requires CcmK proteins and CcmO. CcmL caps the otherwise elongated carboxysome. Once fully encapsulated carboxysomes are formed, they migrate within the cell probably via interactions with the cytoskeleton. The protein is Carboxysome assembly protein CcmN of Synechocystis sp. (strain ATCC 27184 / PCC 6803 / Kazusa).